A 198-amino-acid polypeptide reads, in one-letter code: Integrator complex subunit 8-like protein (198 aa).

Belongs to the Integrator subunit 8 family. Component of the Integrator complex. The core complex associates with protein phosphatase 2A subunits, to form the Integrator-PP2A (INTAC) complex.

The protein resides in the nucleus. Its subcellular location is the chromosome. Component of the integrator complex, a multiprotein complex that terminates RNA polymerase II (Pol II) transcription in the promoter-proximal region of genes. The integrator complex provides a quality checkpoint during transcription elongation by driving premature transcription termination of transcripts that are unfavorably configured for transcriptional elongation: the complex terminates transcription by (1) catalyzing dephosphorylation of the C-terminal domain (CTD) of Pol II subunit polr2a, (2) degrading the exiting nascent RNA transcript via endonuclease activity and (3) promoting the release of Pol II from bound DNA. The integrator complex is also involved in terminating the synthesis of non-coding Pol II transcripts, such as enhancer RNAs (eRNAs), small nuclear RNAs (snRNAs), telomerase RNAs and long non-coding RNAs (lncRNAs). Within the integrator complex, INTS8 is required for the recruitment of protein phosphatase 2A (PP2A) to transcription pause-release checkpoint. The polypeptide is Integrator complex subunit 8-like protein (Dictyostelium discoideum (Social amoeba)).